The chain runs to 508 residues: Hydroxymethylglutaryl-CoA synthase, mitochondrial (508 aa).

A mitochondrion-targeting transit peptide spans 1-37; the sequence is MQRLLAPARRVLQVKRAMQETSLTPAHLLSAAQQRFS. Position 52 is an N6-succinyllysine (K52). Residues E80 and A81 each coordinate (3S)-3-hydroxy-3-methylglutaryl-CoA. An N6-acetyllysine; alternate mark is found at K83 and K118. N6-succinyllysine; alternate occurs at positions 83 and 118. The active-site Proton donor/acceptor is E132. Residues C166, N204, and T208 each coordinate (3S)-3-hydroxy-3-methylglutaryl-CoA. C166 acts as the Acyl-thioester intermediate in catalysis. The residue at position 221 (K221) is an N6-succinyllysine. K243 is subject to N6-acetyllysine. At K256 the chain carries N6-acetyllysine; alternate. The residue at position 256 (K256) is an N6-succinyllysine; alternate. The (3S)-3-hydroxy-3-methylglutaryl-CoA site is built by S258 and H301. Catalysis depends on H301, which acts as the Proton donor/acceptor. K306 carries the post-translational modification N6-acetyllysine. K310 is a (3S)-3-hydroxy-3-methylglutaryl-CoA binding site. N6-acetyllysine; alternate is present on residues K310 and K327. K310 and K327 each carry N6-succinyllysine; alternate. K333 carries the post-translational modification N6-succinyllysine. 4 positions are modified to N6-acetyllysine; alternate: K342, K350, K354, and K358. An N6-succinyllysine; alternate mark is found at K342, K350, K354, and K358. Residues N380 and S414 each contribute to the (3S)-3-hydroxy-3-methylglutaryl-CoA site. Position 427 is an N6-acetyllysine (K427). A Phosphoserine modification is found at S433. K437 carries the post-translational modification N6-acetyllysine. S440 bears the Phosphoserine mark. K447 carries the N6-acetyllysine; alternate modification. The residue at position 447 (K447) is an N6-succinyllysine; alternate. A Phosphoserine modification is found at S456. K473 is subject to N6-acetyllysine; alternate. The residue at position 473 (K473) is an N6-succinyllysine; alternate. S477 carries the phosphoserine modification.

It belongs to the thiolase-like superfamily. HMG-CoA synthase family. In terms of assembly, homodimer. In terms of processing, acetylation of Lys-427 is observed in liver mitochondria from fasted mice but not from fed mice. Post-translationally, succinylated. Desuccinylated by SIRT5. Succinylation, at least at Lys-83 and Lys-310, inhibits the enzymatic activity. As to expression, liver and kidney.

It localises to the mitochondrion. It catalyses the reaction acetoacetyl-CoA + acetyl-CoA + H2O = (3S)-3-hydroxy-3-methylglutaryl-CoA + CoA + H(+). It functions in the pathway metabolic intermediate biosynthesis; (R)-mevalonate biosynthesis; (R)-mevalonate from acetyl-CoA: step 2/3. Its function is as follows. Catalyzes the first irreversible step in ketogenesis, condensing acetyl-CoA to acetoacetyl-CoA to form HMG-CoA, which is converted by HMG-CoA reductase (HMGCR) into mevalonate. This is Hydroxymethylglutaryl-CoA synthase, mitochondrial (Hmgcs2) from Mus musculus (Mouse).